A 418-amino-acid chain; its full sequence is Nisin biosynthesis protein NisC (418 aa).

It to B.subtilis SpaC and S.epidermidis EpiC.

Its function is as follows. Could be implicated in the processing or the export process of the nisin lantibiotic. This Lactococcus lactis subsp. lactis (Streptococcus lactis) protein is Nisin biosynthesis protein NisC (nisC).